The primary structure comprises 180 residues: Protein SPMIP9 (180 aa).

As to quaternary structure, microtubule inner protein component of sperm flagellar doublet microtubules. Only detected after the mouse is 35 days old. Expression increases gradually from day 35 to 6 months, and remains stable after 54 days. Exclusively expressed in the epididymis and testis.

The protein localises to the nucleus. It is found in the cytoplasm. It localises to the cytoskeleton. The protein resides in the flagellum axoneme. In terms of biological role, microtubule inner protein (MIP) part of the dynein-decorated doublet microtubules (DMTs) in flagella axoneme. This chain is Protein SPMIP9 (Spmip9), found in Mus musculus (Mouse).